A 108-amino-acid chain; its full sequence is DNA-binding protein HBbu (108 aa).

The protein belongs to the bacterial histone-like protein family.

Histone-like DNA-binding protein which is capable of wrapping DNA to stabilize it, and thus to prevent its denaturation under extreme environmental conditions. This is DNA-binding protein HBbu (hbb) from Borreliella afzelii (Borrelia afzelii).